Here is a 184-residue protein sequence, read N- to C-terminus: MRYEYVPLKDQYEKEIVPALMKEFNYKNIHQVPKLVKIVINMGIGEGSRNYDLIERHANELAKITGQKPIVTRARKSISNFKIRKGMPIGLKVTLRGARMYNFLYKLINIVLPKVRDFRGLDPNSFDGRGNYSFGLSEQLVFPELSPDEVRRIQGMDITIVTTAKTDQEARRLLELFGMPFKRG.

This sequence belongs to the universal ribosomal protein uL5 family. As to quaternary structure, part of the 50S ribosomal subunit; part of the 5S rRNA/L5/L18/L25 subcomplex. Contacts the 5S rRNA and the P site tRNA. Forms a bridge to the 30S subunit in the 70S ribosome.

Its function is as follows. This is one of the proteins that bind and probably mediate the attachment of the 5S RNA into the large ribosomal subunit, where it forms part of the central protuberance. In the 70S ribosome it contacts protein S13 of the 30S subunit (bridge B1b), connecting the 2 subunits; this bridge is implicated in subunit movement. Contacts the P site tRNA; the 5S rRNA and some of its associated proteins might help stabilize positioning of ribosome-bound tRNAs. This is Large ribosomal subunit protein uL5 from Thermotoga sp. (strain RQ2).